Consider the following 162-residue polypeptide: Endoribonuclease YbeY (162 aa).

His-130, His-134, and His-140 together coordinate Zn(2+).

Belongs to the endoribonuclease YbeY family. Requires Zn(2+) as cofactor.

It is found in the cytoplasm. In terms of biological role, single strand-specific metallo-endoribonuclease involved in late-stage 70S ribosome quality control and in maturation of the 3' terminus of the 16S rRNA. This Nitratidesulfovibrio vulgaris (strain ATCC 29579 / DSM 644 / CCUG 34227 / NCIMB 8303 / VKM B-1760 / Hildenborough) (Desulfovibrio vulgaris) protein is Endoribonuclease YbeY.